A 476-amino-acid chain; its full sequence is Adenosylhomocysteinase (476 aa).

Substrate is bound by residues Thr-67, Asp-142, and Glu-202. 203–205 (TTT) is an NAD(+) binding site. Substrate contacts are provided by Lys-232 and Asp-236. Residues Asn-237, 266–271 (GYGDVG), Glu-289, Asn-324, 345–347 (IGH), and Asn-390 each bind NAD(+).

The protein belongs to the adenosylhomocysteinase family. Requires NAD(+) as cofactor.

The protein resides in the cytoplasm. It catalyses the reaction S-adenosyl-L-homocysteine + H2O = L-homocysteine + adenosine. Its pathway is amino-acid biosynthesis; L-homocysteine biosynthesis; L-homocysteine from S-adenosyl-L-homocysteine: step 1/1. Its function is as follows. May play a key role in the regulation of the intracellular concentration of adenosylhomocysteine. In Synechococcus sp. (strain CC9605), this protein is Adenosylhomocysteinase.